A 165-amino-acid chain; its full sequence is Lithostathine (165 aa).

An N-terminal signal peptide occupies residues 1–21; the sequence is MTRNKYFILLSCLMVLSPSQG. Q22 carries the pyrrolidone carboxylic acid modification. Residues 33–163 enclose the C-type lectin domain; the sequence is ITCPEGSNAY…DAQLSFVCKF (131 aa). Disulfide bonds link C35–C46, C63–C161, and C136–C153. N129 carries an N-linked (GlcNAc...) asparagine glycan.

Expressed only in regenerating islets, but not in normal pancreatic islets, insulinomas or regenerating liver.

It is found in the secreted. Functionally, might act as an inhibitor of spontaneous calcium carbonate precipitation. The protein is Lithostathine (Reg1) of Rattus norvegicus (Rat).